A 695-amino-acid chain; its full sequence is Elongation factor G 1 (695 aa).

The tr-type G domain occupies Lys6–Asp284. GTP is bound by residues Ala15–Thr22, Asp82–His86, and Asn136–Asp139.

This sequence belongs to the TRAFAC class translation factor GTPase superfamily. Classic translation factor GTPase family. EF-G/EF-2 subfamily.

It is found in the cytoplasm. In terms of biological role, catalyzes the GTP-dependent ribosomal translocation step during translation elongation. During this step, the ribosome changes from the pre-translocational (PRE) to the post-translocational (POST) state as the newly formed A-site-bound peptidyl-tRNA and P-site-bound deacylated tRNA move to the P and E sites, respectively. Catalyzes the coordinated movement of the two tRNA molecules, the mRNA and conformational changes in the ribosome. The protein is Elongation factor G 1 of Syntrophus aciditrophicus (strain SB).